The chain runs to 441 residues: E3 ubiquitin-protein ligase APD1 (441 aa).

Helical transmembrane passes span 60–80 (SNLY…FILI) and 305–325 (IAYV…IQFC). The RING-type zinc-finger motif lies at 390–429 (CAICFDVPRDCFFLPCGHSVSCYECGTTMQEADGSCPICR).

Expressed in the shoot apical meristems (SAM), root tips and inflorescences, and, at low levels, in floral buds and pollen.

Its subcellular location is the endomembrane system. The protein resides in the vacuole membrane. It carries out the reaction S-ubiquitinyl-[E2 ubiquitin-conjugating enzyme]-L-cysteine + [acceptor protein]-L-lysine = [E2 ubiquitin-conjugating enzyme]-L-cysteine + N(6)-ubiquitinyl-[acceptor protein]-L-lysine.. The protein operates within protein modification; protein ubiquitination. Functionally, involved in pollen mitosis II (PMII) regulation during male gametogenesis. In Arabidopsis thaliana (Mouse-ear cress), this protein is E3 ubiquitin-protein ligase APD1.